The primary structure comprises 32 residues: ilv operon leader peptide (32 aa).

Functionally, this protein is involved in control of the biosynthesis of isoleucine, leucine, and valine. In Escherichia coli (strain K12), this protein is ilv operon leader peptide (ivbL).